A 387-amino-acid polypeptide reads, in one-letter code: BarH-like 2 homeobox protein (387 aa).

Disordered regions lie at residues 1–145 (MTME…FLIK), 157–240 (CAPY…TAFS), and 367–387 (PGGQPALNPLSSPIPGTPHPR). Over residues 7 to 24 (SGSSFGIDTILSSASSGS) the composition is skewed to polar residues. Positions 100 to 113 (APTQSLQPLPQQQQ) are enriched in low complexity. Positions 114 to 126 (PLPPQQPPPPPPQ) are enriched in pro residues. Over residues 127–141 (QLGSAASAPRTSTSS) the composition is skewed to low complexity. The span at 160 to 178 (YSTSVSSPHHTPKQESNAV) shows a compositional bias: polar residues. A compositionally biased stretch (basic and acidic residues) spans 180-220 (ESFRPKLEQEDSKTKLDKREDSQSDIKCHGTKEEGDREITS). A DNA-binding region (homeobox) is located at residues 232 to 291 (PRKARTAFSDHQLNQLERSFERQKYLSVQDRMDLAAALNLTDTQVKTWYQNRRTKWKRQT).

Belongs to the BAR homeobox family.

The protein localises to the nucleus. Its function is as follows. Potential regulator of neural basic helix-loop-helix genes. In Homo sapiens (Human), this protein is BarH-like 2 homeobox protein (BARHL2).